A 439-amino-acid chain; its full sequence is GTPase Der (439 aa).

2 consecutive EngA-type G domains span residues 2 to 167 (PTVL…ESKG) and 182 to 358 (IRVS…KSLH). Residues 8-15 (GKSNVGKS), 55-59 (DTGGI), 118-121 (NKSE), 188-195 (GRPNAGKS), 235-239 (DTAGL), and 301-304 (NKID) each bind GTP. The KH-like domain occupies 359 to 439 (YRVQTSAVNS…PIFLKFKSRH (81 aa)).

The protein belongs to the TRAFAC class TrmE-Era-EngA-EngB-Septin-like GTPase superfamily. EngA (Der) GTPase family. Associates with the 50S ribosomal subunit.

GTPase that plays an essential role in the late steps of ribosome biogenesis. The sequence is that of GTPase Der from Thermosipho africanus (strain TCF52B).